The primary structure comprises 317 residues: F-box protein FBW2 (317 aa).

The F-box domain maps to 7-54; the sequence is FRHWDELIPDALGLIFSHLPLQEVLTVVPRVCKAWNRAVTGPYCWQEI.

Part of a SCF (SKP1-cullin-F-box) protein ligase complex. Interacts with CUL1, CUL2 and SPK1B/ASK2.

It localises to the nucleus. The protein operates within protein modification; protein ubiquitination. Component of SCF(ASK-cullin-F-box) E3 ubiquitin ligase complexes, which may mediate the ubiquitination and subsequent proteasomal degradation of target proteins. The sequence is that of F-box protein FBW2 (FBW2) from Arabidopsis thaliana (Mouse-ear cress).